A 146-amino-acid chain; its full sequence is UPF0306 protein CKO_04548 (146 aa).

The protein belongs to the UPF0306 family.

The protein is UPF0306 protein CKO_04548 of Citrobacter koseri (strain ATCC BAA-895 / CDC 4225-83 / SGSC4696).